The sequence spans 326 residues: Beta-ketoacyl-[acyl-carrier-protein] synthase III (326 aa).

Residues Cys-111 and His-253 contribute to the active site. Positions 254 to 258 (QANSR) are ACP-binding. Asn-283 is an active-site residue.

This sequence belongs to the thiolase-like superfamily. FabH family. In terms of assembly, homodimer.

The protein resides in the cytoplasm. The catalysed reaction is malonyl-[ACP] + acetyl-CoA + H(+) = 3-oxobutanoyl-[ACP] + CO2 + CoA. Its pathway is lipid metabolism; fatty acid biosynthesis. Its function is as follows. Catalyzes the condensation reaction of fatty acid synthesis by the addition to an acyl acceptor of two carbons from malonyl-ACP. Catalyzes the first condensation reaction which initiates fatty acid synthesis and may therefore play a role in governing the total rate of fatty acid production. Possesses both acetoacetyl-ACP synthase and acetyl transacylase activities. Its substrate specificity determines the biosynthesis of branched-chain and/or straight-chain of fatty acids. This is Beta-ketoacyl-[acyl-carrier-protein] synthase III from Latilactobacillus sakei subsp. sakei (strain 23K) (Lactobacillus sakei subsp. sakei).